The following is a 248-amino-acid chain: 4-hydroxy-tetrahydrodipicolinate reductase (248 aa).

Residues 8–13, 75–77, and 99–102 each bind NAD(+); these read GAKGRM, GTT, and ATNM. Residue histidine 131 is the Proton donor/acceptor of the active site. Histidine 132 provides a ligand contact to (S)-2,3,4,5-tetrahydrodipicolinate. Residue lysine 135 is the Proton donor of the active site. 141 to 142 is a (S)-2,3,4,5-tetrahydrodipicolinate binding site; that stretch reads GT.

It belongs to the DapB family.

The protein resides in the cytoplasm. It carries out the reaction (S)-2,3,4,5-tetrahydrodipicolinate + NAD(+) + H2O = (2S,4S)-4-hydroxy-2,3,4,5-tetrahydrodipicolinate + NADH + H(+). It catalyses the reaction (S)-2,3,4,5-tetrahydrodipicolinate + NADP(+) + H2O = (2S,4S)-4-hydroxy-2,3,4,5-tetrahydrodipicolinate + NADPH + H(+). Its pathway is amino-acid biosynthesis; L-lysine biosynthesis via DAP pathway; (S)-tetrahydrodipicolinate from L-aspartate: step 4/4. Catalyzes the conversion of 4-hydroxy-tetrahydrodipicolinate (HTPA) to tetrahydrodipicolinate. The protein is 4-hydroxy-tetrahydrodipicolinate reductase of Campylobacter jejuni subsp. doylei (strain ATCC BAA-1458 / RM4099 / 269.97).